The sequence spans 190 residues: Recombination protein RecR (190 aa).

The C4-type zinc finger occupies 58–73 (CEQCGALSENELCEIC). In terms of domain architecture, Toprim spans 81–167 (NILCIVESPK…TFSKIAQGIP (87 aa)).

It belongs to the RecR family.

Its function is as follows. May play a role in DNA repair. It seems to be involved in an RecBC-independent recombinational process of DNA repair. It may act with RecF and RecO. The polypeptide is Recombination protein RecR (Campylobacter jejuni subsp. jejuni serotype O:23/36 (strain 81-176)).